Reading from the N-terminus, the 716-residue chain is Translation initiation factor IF-2 (716 aa).

Residues 52–135 (QQESNNNTKQ…PAAEPKEMPS (84 aa)) are disordered. Residues 56–125 (NNNTKQNTQN…KNNKGNKNNK (70 aa)) are compositionally biased toward low complexity. Positions 218–387 (ERPAVVTIMG…GLVAEVQELK (170 aa)) constitute a tr-type G domain. The tract at residues 227 to 234 (GHVDHGKT) is G1. A GTP-binding site is contributed by 227–234 (GHVDHGKT). The G2 stretch occupies residues 252-256 (GITQH). Positions 273-276 (DTPG) are G3. GTP contacts are provided by residues 273 to 277 (DTPGH) and 327 to 330 (NKID). The G4 stretch occupies residues 327–330 (NKID). The G5 stretch occupies residues 363–365 (SAL).

It belongs to the TRAFAC class translation factor GTPase superfamily. Classic translation factor GTPase family. IF-2 subfamily.

It localises to the cytoplasm. Its function is as follows. One of the essential components for the initiation of protein synthesis. Protects formylmethionyl-tRNA from spontaneous hydrolysis and promotes its binding to the 30S ribosomal subunits. Also involved in the hydrolysis of GTP during the formation of the 70S ribosomal complex. This is Translation initiation factor IF-2 from Staphylococcus haemolyticus (strain JCSC1435).